Reading from the N-terminus, the 209-residue chain is ATP-dependent Clp protease proteolytic subunit (209 aa).

Ser103 acts as the Nucleophile in catalysis. Residue His128 is part of the active site.

Belongs to the peptidase S14 family. As to quaternary structure, fourteen ClpP subunits assemble into 2 heptameric rings which stack back to back to give a disk-like structure with a central cavity, resembling the structure of eukaryotic proteasomes.

The protein localises to the cytoplasm. It carries out the reaction Hydrolysis of proteins to small peptides in the presence of ATP and magnesium. alpha-casein is the usual test substrate. In the absence of ATP, only oligopeptides shorter than five residues are hydrolyzed (such as succinyl-Leu-Tyr-|-NHMec, and Leu-Tyr-Leu-|-Tyr-Trp, in which cleavage of the -Tyr-|-Leu- and -Tyr-|-Trp bonds also occurs).. Functionally, cleaves peptides in various proteins in a process that requires ATP hydrolysis. Has a chymotrypsin-like activity. Plays a major role in the degradation of misfolded proteins. This is ATP-dependent Clp protease proteolytic subunit from Lawsonia intracellularis (strain PHE/MN1-00).